The chain runs to 610 residues: ESX-5 secretion system protein EccA5 (610 aa).

Position 357–364 (357–364 (GPPGTGKT)) interacts with ATP.

It belongs to the CbxX/CfxQ family. Part of the ESX-5 / type VII secretion system (T7SS), which is composed of cytosolic and membrane components.

It localises to the cytoplasm. In terms of biological role, part of the ESX-5 specialized secretion system, which is responsible for the secretion of EsxN and a number of PE_PGRS and PPE proteins. EccA5 exhibits ATPase activity and may provide energy for the export of ESX-5 substrates. The protein is ESX-5 secretion system protein EccA5 of Mycobacterium marinum (strain ATCC BAA-535 / M).